Consider the following 472-residue polypeptide: 3-isopropylmalate dehydratase large subunit (472 aa).

The [4Fe-4S] cluster site is built by cysteine 347, cysteine 407, and cysteine 410.

The protein belongs to the aconitase/IPM isomerase family. LeuC type 1 subfamily. As to quaternary structure, heterodimer of LeuC and LeuD. [4Fe-4S] cluster is required as a cofactor.

The enzyme catalyses (2R,3S)-3-isopropylmalate = (2S)-2-isopropylmalate. It participates in amino-acid biosynthesis; L-leucine biosynthesis; L-leucine from 3-methyl-2-oxobutanoate: step 2/4. Functionally, catalyzes the isomerization between 2-isopropylmalate and 3-isopropylmalate, via the formation of 2-isopropylmaleate. The protein is 3-isopropylmalate dehydratase large subunit of Bacillus velezensis (strain DSM 23117 / BGSC 10A6 / LMG 26770 / FZB42) (Bacillus amyloliquefaciens subsp. plantarum).